We begin with the raw amino-acid sequence, 409 residues long: Phosphatidylglycerol--prolipoprotein diacylglyceryl transferase (409 aa).

4 consecutive transmembrane segments (helical) span residues 18-38 (PVPLRAYALMIIIGVFVAVFV), 48-68 (MDPMVASEVAYWAVPFGIVGA), 93-113 (IWNGGLGIWGAIAGGAFGAWL), and 119-139 (GISLALFGDAAAPGIILAQAI). Arg-141 is a binding site for a 1,2-diacyl-sn-glycero-3-phospho-(1'-sn-glycerol). Transmembrane regions (helical) follow at residues 177–197 (QPTFLYECLWNLVVAGILLVV) and 234–254 (ILGLRVNIWTSIVVCLGALLA). The tract at residues 273 to 409 (ALGIARSRPA…AVPPEEPQLP (137 aa)) is disordered. 3 stretches are compositionally biased toward low complexity: residues 297–309 (AAAPDSAGPDSAA), 320–335 (PDLGGPDPADPGSAGS), and 348–375 (TATTATTATTATTATTATTATTATTATT).

It belongs to the Lgt family.

The protein resides in the cell membrane. The enzyme catalyses L-cysteinyl-[prolipoprotein] + a 1,2-diacyl-sn-glycero-3-phospho-(1'-sn-glycerol) = an S-1,2-diacyl-sn-glyceryl-L-cysteinyl-[prolipoprotein] + sn-glycerol 1-phosphate + H(+). It participates in protein modification; lipoprotein biosynthesis (diacylglyceryl transfer). Its function is as follows. Catalyzes the transfer of the diacylglyceryl group from phosphatidylglycerol to the sulfhydryl group of the N-terminal cysteine of a prolipoprotein, the first step in the formation of mature lipoproteins. This chain is Phosphatidylglycerol--prolipoprotein diacylglyceryl transferase, found in Frankia casuarinae (strain DSM 45818 / CECT 9043 / HFP020203 / CcI3).